A 401-amino-acid chain; its full sequence is 2,3,4,5-tetrahydropyridine-2,6-dicarboxylate N-succinyltransferase (401 aa).

The Acyl-anhydride intermediate role is filled by Glu269. Residues Arg271, Gly286, Ser289, Ala312, Asp327 to Ala328, Gly335, and Lys364 contribute to the succinyl-CoA site.

The protein belongs to the type 2 tetrahydrodipicolinate N-succinyltransferase family. Homotrimer.

The protein resides in the cytoplasm. The enzyme catalyses (S)-2,3,4,5-tetrahydrodipicolinate + succinyl-CoA + H2O = (S)-2-succinylamino-6-oxoheptanedioate + CoA. It participates in amino-acid biosynthesis; L-lysine biosynthesis via DAP pathway; LL-2,6-diaminopimelate from (S)-tetrahydrodipicolinate (succinylase route): step 1/3. Catalyzes the conversion of the cyclic tetrahydrodipicolinate (THDP) into the acyclic N-succinyl-L-2-amino-6-oxopimelate using succinyl-CoA. In Helicobacter pylori (strain ATCC 700392 / 26695) (Campylobacter pylori), this protein is 2,3,4,5-tetrahydropyridine-2,6-dicarboxylate N-succinyltransferase.